The chain runs to 66 residues: MAKKNASLLVKLVSTATKTTKTGEEKLTGYFCVKKRNPKNLPKKLEFRKYDPVVRRHVLFKEEKLK.

This sequence belongs to the bacterial ribosomal protein bL33 family.

This is Large ribosomal subunit protein bL33 from Wolbachia pipientis subsp. Culex pipiens (strain wPip).